We begin with the raw amino-acid sequence, 437 residues long: Protein translocase subunit SecY (437 aa).

Helical transmembrane passes span 19–39 (LFTLGIIVVYRLGTHIPIPGV), 69–89 (LLQITVFALGIMPYITASIIL), 122–142 (VALAILQGTGLVATARSGALF), 157–177 (IFTTVVMVICMTAGTCVVMWL), 189–209 (GMSILMFISIAATFPSALWAI), 219–239 (WIEFGTVILVGLVMVGLVVFV), 275–295 (GVIPVIFASSLLYIPALIVQF), 318–338 (HIILYFFLIVFFAFFYVAISF), 378–398 (GSLYLGLIALVPTMALAGFGA), and 400–420 (QNFPFGGTSILIIVGVGLETV).

The protein belongs to the SecY/SEC61-alpha family. In terms of assembly, component of the Sec protein translocase complex. Heterotrimer consisting of SecY, SecE and SecG subunits. The heterotrimers can form oligomers, although 1 heterotrimer is thought to be able to translocate proteins. Interacts with the ribosome. Interacts with SecDF, and other proteins may be involved. Interacts with SecA.

It is found in the cell membrane. In terms of biological role, the central subunit of the protein translocation channel SecYEG. Consists of two halves formed by TMs 1-5 and 6-10. These two domains form a lateral gate at the front which open onto the bilayer between TMs 2 and 7, and are clamped together by SecE at the back. The channel is closed by both a pore ring composed of hydrophobic SecY resides and a short helix (helix 2A) on the extracellular side of the membrane which forms a plug. The plug probably moves laterally to allow the channel to open. The ring and the pore may move independently. In Streptomyces lividans, this protein is Protein translocase subunit SecY.